Here is a 227-residue protein sequence, read N- to C-terminus: MGRGRVQLKRIENKINRQVTFSKRRSGLLKKAHEISVLCDAEVGLIVFSTKGKLFEYANDSCMERILERYERYSFAEKQLVPTDHTSPVSWTLEHRKLKARLEVLQRNQKHYVGEDLESLSMKELQNLEHQLDSALKHIRSRKNQLMHESISVLQKKDRALQEQNNQLSKKVKEREKSAQQISGINSSSLFAHTDFYLGTYQSTNVIDNGKWKEVVLHSSKVQLIIL.

An MADS-box domain is found at Arg3–Tyr57. Residues Pro88–Ser178 enclose the K-box domain.

As to expression, flower specific.

The protein resides in the nucleus. Functionally, probable transcription factor. The polypeptide is Agamous-like MADS-box protein AGL8 homolog (TDR4) (Solanum lycopersicum (Tomato)).